A 320-amino-acid polypeptide reads, in one-letter code: Cytosolic Fe-S cluster assembly factor NUBP1 (320 aa).

Met-1 carries the post-translational modification N-acetylmethionine. Cys-8, Cys-22, Cys-25, and Cys-31 together coordinate [4Fe-4S] cluster. 62-69 (GKGGVGKS) is a binding site for ATP. Positions 235 and 238 each coordinate [4Fe-4S] cluster. Ser-319 is modified (phosphoserine).

It belongs to the Mrp/NBP35 ATP-binding proteins family. NUBP1/NBP35 subfamily. As to quaternary structure, heterotetramer of 2 NUBP1 and 2 NUBP2 chains. Interacts with KIFC1. Interacts with the BBS/CCT complex subunit CCT1. Requires [4Fe-4S] cluster as cofactor.

It is found in the cytoplasm. Its subcellular location is the nucleus. The protein localises to the cell projection. It localises to the cytoskeleton. The protein resides in the cilium axoneme. It is found in the cilium basal body. Its subcellular location is the microtubule organizing center. The protein localises to the centrosome. It localises to the centriole. Component of the cytosolic iron-sulfur (Fe/S) protein assembly (CIA) machinery. Required for maturation of extramitochondrial Fe-S proteins. The NUBP1-NUBP2 heterotetramer forms a Fe-S scaffold complex, mediating the de novo assembly of an Fe-S cluster and its transfer to target apoproteins. Implicated in the regulation of centrosome duplication. Negatively regulates cilium formation and structure. This is Cytosolic Fe-S cluster assembly factor NUBP1 from Rattus norvegicus (Rat).